The primary structure comprises 226 residues: ATP-dependent Clp protease proteolytic subunit 4 (226 aa).

Ser122 acts as the Nucleophile in catalysis. The active site involves His147.

It belongs to the peptidase S14 family. As to quaternary structure, fourteen ClpP subunits assemble into 2 heptameric rings which stack back to back to give a disk-like structure with a central cavity, resembling the structure of eukaryotic proteasomes.

It localises to the cytoplasm. The enzyme catalyses Hydrolysis of proteins to small peptides in the presence of ATP and magnesium. alpha-casein is the usual test substrate. In the absence of ATP, only oligopeptides shorter than five residues are hydrolyzed (such as succinyl-Leu-Tyr-|-NHMec, and Leu-Tyr-Leu-|-Tyr-Trp, in which cleavage of the -Tyr-|-Leu- and -Tyr-|-Trp bonds also occurs).. Cleaves peptides in various proteins in a process that requires ATP hydrolysis. Has a chymotrypsin-like activity. Plays a major role in the degradation of misfolded proteins. The sequence is that of ATP-dependent Clp protease proteolytic subunit 4 from Streptomyces avermitilis (strain ATCC 31267 / DSM 46492 / JCM 5070 / NBRC 14893 / NCIMB 12804 / NRRL 8165 / MA-4680).